Consider the following 189-residue polypeptide: Glycerol-3-phosphate acyltransferase (189 aa).

5 helical membrane passes run 1-21 (MFWL…AILL), 51-71 (LAIL…LIAS), 77-97 (LQDQ…PLYF), 111-131 (MLLG…LLTF), and 151-171 (LLAW…LLIV).

The protein belongs to the PlsY family. Probably interacts with PlsX.

It localises to the cell inner membrane. The catalysed reaction is an acyl phosphate + sn-glycerol 3-phosphate = a 1-acyl-sn-glycero-3-phosphate + phosphate. The protein operates within lipid metabolism; phospholipid metabolism. In terms of biological role, catalyzes the transfer of an acyl group from acyl-phosphate (acyl-PO(4)) to glycerol-3-phosphate (G3P) to form lysophosphatidic acid (LPA). This enzyme utilizes acyl-phosphate as fatty acyl donor, but not acyl-CoA or acyl-ACP. This chain is Glycerol-3-phosphate acyltransferase, found in Pseudomonas fluorescens (strain Pf0-1).